The sequence spans 116 residues: Large ribosomal subunit protein bL19 (116 aa).

The protein belongs to the bacterial ribosomal protein bL19 family.

Its function is as follows. This protein is located at the 30S-50S ribosomal subunit interface and may play a role in the structure and function of the aminoacyl-tRNA binding site. The sequence is that of Large ribosomal subunit protein bL19 from Clostridium beijerinckii (strain ATCC 51743 / NCIMB 8052) (Clostridium acetobutylicum).